Consider the following 206-residue polypeptide: FMN-dependent NADH:quinone oxidoreductase 2 (206 aa).

FMN is bound by residues Ser10, 16–18 (SYS), and 140–143 (SCGG).

The protein belongs to the azoreductase type 1 family. In terms of assembly, homodimer. The cofactor is FMN.

It catalyses the reaction 2 a quinone + NADH + H(+) = 2 a 1,4-benzosemiquinone + NAD(+). The catalysed reaction is N,N-dimethyl-1,4-phenylenediamine + anthranilate + 2 NAD(+) = 2-(4-dimethylaminophenyl)diazenylbenzoate + 2 NADH + 2 H(+). In terms of biological role, quinone reductase that provides resistance to thiol-specific stress caused by electrophilic quinones. Functionally, also exhibits azoreductase activity. Catalyzes the reductive cleavage of the azo bond in aromatic azo compounds to the corresponding amines. In Cupriavidus pinatubonensis (strain JMP 134 / LMG 1197) (Cupriavidus necator (strain JMP 134)), this protein is FMN-dependent NADH:quinone oxidoreductase 2.